The sequence spans 347 residues: Dihydroorotate dehydrogenase (quinone) (347 aa).

FMN-binding positions include 61 to 65 and Thr-85; that span reads AGLDK. Residue Lys-65 coordinates substrate. 110-114 is a substrate binding site; the sequence is NRMGF. Residues Asn-138 and Asn-171 each contribute to the FMN site. A substrate-binding site is contributed by Asn-171. The active-site Nucleophile is the Ser-174. Asn-176 contacts substrate. Residues Lys-216 and Thr-244 each coordinate FMN. 245 to 246 provides a ligand contact to substrate; sequence NT. FMN-binding positions include Gly-267, Gly-296, and 317 to 318; that span reads YT.

It belongs to the dihydroorotate dehydrogenase family. Type 2 subfamily. In terms of assembly, monomer. It depends on FMN as a cofactor.

It localises to the cell membrane. It catalyses the reaction (S)-dihydroorotate + a quinone = orotate + a quinol. The protein operates within pyrimidine metabolism; UMP biosynthesis via de novo pathway; orotate from (S)-dihydroorotate (quinone route): step 1/1. Functionally, catalyzes the conversion of dihydroorotate to orotate with quinone as electron acceptor. This Azotobacter vinelandii (strain DJ / ATCC BAA-1303) protein is Dihydroorotate dehydrogenase (quinone).